Reading from the N-terminus, the 303-residue chain is Ribosomal protein L11 methyltransferase (303 aa).

Positions 144, 165, 187, and 235 each coordinate S-adenosyl-L-methionine.

Belongs to the methyltransferase superfamily. PrmA family.

The protein localises to the cytoplasm. The catalysed reaction is L-lysyl-[protein] + 3 S-adenosyl-L-methionine = N(6),N(6),N(6)-trimethyl-L-lysyl-[protein] + 3 S-adenosyl-L-homocysteine + 3 H(+). In terms of biological role, methylates ribosomal protein L11. The chain is Ribosomal protein L11 methyltransferase from Prochlorococcus marinus (strain AS9601).